We begin with the raw amino-acid sequence, 137 residues long: Large ribosomal subunit protein bL21 (137 aa).

A disordered region spans residues 1–26 (MADTKTATPATDAEEATATPPAAAPS).

It belongs to the bacterial ribosomal protein bL21 family. Part of the 50S ribosomal subunit. Contacts protein L20.

This protein binds to 23S rRNA in the presence of protein L20. The sequence is that of Large ribosomal subunit protein bL21 from Parasynechococcus marenigrum (strain WH8102).